We begin with the raw amino-acid sequence, 53 residues long: MFRWGIIFLVIALIAAALGFGGLAGTAAGAAKIVFVVGIILFLVSLFTGRRRP.

Helical transmembrane passes span 4–24 (WGII…GGLA) and 30–47 (AAKI…VSLF).

The protein belongs to the UPF0391 family.

It localises to the cell membrane. This is UPF0391 membrane protein KPK_4780 from Klebsiella pneumoniae (strain 342).